A 98-amino-acid chain; its full sequence is Dehydrogenase acuH (98 aa).

Its pathway is secondary metabolite biosynthesis. Dehydrogenase; part of the gene cluster that mediates the biosynthesis of aculins. The pathway begins with the synthesis of 6-methylsalicylic acid by the polyketide synthase (PKS) acuA via condensation of acetate and malonate units. The 6-methylsalicylic acid decarboxylase acuB then catalyzes the decarboxylation of 6-methylsalicylic acid to yield m-cresol (also known as 3-methylphenol). These first reactions occur in the cytosol. The intermediate m-cresol is then transported into the endoplasmic reticulum where the cytochrome P450 monooxygenase acuC converts it to m-hydroxybenzyl alcohol, which is further converted to gentisyl alcohol by the cytochrome P450 monooxygenase acuD. Gentisyl alcohol is further oxidized by the oxidoreductase acuE that probably catalyzes hydroxylation of the aromatic ring. The aromatic system might then be opened by oxidation through a Baeyer-Villiger type of oxidation, which could be catalyzed by acuF, with the carboxylic acid at C-1 subsequently reduced to an aldehyde by acuG. Subsequently, a hemiacetal is formed, before the dehydrogenase acuH would reduce the double bond between C-4 and C-6. Finally, keto-enol tautomerism results in formation of aculinic acid, which exists as two diastereomers (both R/S configurations at C-1) by non-enzymatic hemiacetal formation. The carboxypeptidase acuI could be involved in the linking of aculinic acid to an aculene A moiety produced by the aculene biosynthesis cluster and which leads to the production of aculin A. AcuI may also be involved in the attachment of proline to aculinic acid to form epi-aculins A and B. In Aspergillus aculeatus (strain ATCC 16872 / CBS 172.66 / WB 5094), this protein is Dehydrogenase acuH.